Reading from the N-terminus, the 742-residue chain is 2'-5'-oligoadenylate synthase 2 (742 aa).

Residues 1–35 are disordered; it reads MGNWLTGNWSSDRSSGYSSGWSPGGSSGVPSGPVH. Gly-2 is lipidated: N-myristoyl glycine. The span at 10–21 shows a compositional bias: low complexity; sequence SSDRSSGYSSGW. OAS domain regions lie at residues 60–374 and 382–721; these read VPSQ…YWDV and TPSH…WKVP. Lys-417 carries the N6-acetyllysine modification. Position 436 (Ser-436) interacts with ATP. Mg(2+) contacts are provided by Asp-448, Asp-450, and Asp-519. Residues Arg-582 and Lys-585 each contribute to the ATP site.

It belongs to the 2-5A synthase family. As to quaternary structure, homodimer. Mg(2+) serves as cofactor. In terms of processing, myristoylation is not essential for its activity. Post-translationally, glycosylated. Glycosylation is essential for its activity. Expressed in the uterus. Expressed in mammary glands: expressed at low level before the establishment of lactation, then expression strongly increases, and subsequently decreases during early involution.

The protein localises to the cytoplasm. The protein resides in the perinuclear region. The enzyme catalyses 3 ATP = 5'-triphosphoadenylyl-(2'-&gt;5')-adenylyl-(2'-&gt;5')-adenosine + 2 diphosphate. Produced as a latent enzyme which is activated by double stranded RNA (dsRNA) generated during the course of viral infection. The dsRNA activator must be at least 15 nucleotides long, and no modification of the 2'-hydroxyl group is tolerated. ssRNA or dsDNA do not act as activators. Strongly inhibited by copper, iron and zinc ions. Partially inhibited by cobalt and nickel ions. Its function is as follows. Interferon-induced, dsRNA-activated antiviral enzyme which plays a critical role in cellular innate antiviral response. Activated by detection of double stranded RNA (dsRNA): polymerizes higher oligomers of 2'-5'-oligoadenylates (2-5A) from ATP which then bind to the inactive monomeric form of ribonuclease L (RNASEL) leading to its dimerization and subsequent activation. Activation of RNASEL leads to degradation of cellular as well as viral RNA, resulting in the inhibition of protein synthesis, thus terminating viral replication. Can mediate the antiviral effect via the classical RNASEL-dependent pathway or an alternative antiviral pathway independent of RNASEL. In addition, it may also play a role in other cellular processes such as apoptosis, cell growth, differentiation and gene regulation. May act as a negative regulator of lactation, stopping lactation in virally infected mammary gland lobules, thereby preventing transmission of viruses to neonates. Non-infected lobules would not be affected, allowing efficient pup feeding during infection. This chain is 2'-5'-oligoadenylate synthase 2, found in Mus musculus (Mouse).